Consider the following 283-residue polypeptide: Pre-protein-C8 (283 aa).

A signal peptide (tat-type signal) is located at residues 1–40; it reads MKEDNNTSEESGRINRRNVLKTVGAAGLFAAGSTGMAAAA. The interval 61-75 is helix-loop-helix (HLH) region; the sequence is ARELAKTPAFRELAQ.

In terms of assembly, immunity protein HalI interacts with Halocin-C8; the interaction is direct. Predicted to be exported by the Tat system. The position of the signal peptide cleavage has not been experimentally proven.

The protein localises to the secreted. Its subcellular location is the cell membrane. Its function is as follows. Has antibacterial activity against a wide variety of haloarchaeons. Causes cell lysis and death, possibly by disrupting the cell wall. Acts as an immunity protein for halocin-C8. Able to block the halocin-C8 activity by sequestering the activity of halocin-C8 through specific and direct binding. This Halobacterium sp. (strain AS7092) protein is Pre-protein-C8 (proC8).